The sequence spans 202 residues: LexA repressor (202 aa).

The segment at residues 28–47 (IREIGDQFGITAKGAYDHLK) is a DNA-binding region (H-T-H motif). Active-site for autocatalytic cleavage activity residues include Ser-126 and Lys-163.

This sequence belongs to the peptidase S24 family. As to quaternary structure, homodimer.

It catalyses the reaction Hydrolysis of Ala-|-Gly bond in repressor LexA.. Functionally, represses a number of genes involved in the response to DNA damage (SOS response), including recA and lexA. In the presence of single-stranded DNA, RecA interacts with LexA causing an autocatalytic cleavage which disrupts the DNA-binding part of LexA, leading to derepression of the SOS regulon and eventually DNA repair. This chain is LexA repressor, found in Leptospira biflexa serovar Patoc (strain Patoc 1 / Ames).